The sequence spans 610 residues: Phosphoenolpyruvate carboxykinase [GTP] (610 aa).

Residues Arg82 and 221–223 (YGG) contribute to the substrate site. Positions 230 and 250 each coordinate Mn(2+). Ser272 lines the substrate pocket. Position 273–278 (273–278 (ACGKTN)) interacts with GTP. The active site involves Cys274. Asp297 contacts Mn(2+). 387–389 (NSR) is a substrate binding site. GTP-binding positions include Arg389, Arg420, and 515-518 (FGDN).

Belongs to the phosphoenolpyruvate carboxykinase [GTP] family. In terms of assembly, monomer. Requires Mn(2+) as cofactor.

The protein localises to the cytoplasm. It carries out the reaction oxaloacetate + GTP = phosphoenolpyruvate + GDP + CO2. It participates in carbohydrate biosynthesis; gluconeogenesis. Involved in the gluconeogenesis. Catalyzes the conversion of oxaloacetate (OAA) to phosphoenolpyruvate (PEP), the rate-limiting step in the metabolic pathway that produces glucose from lactate and other precursors derived from the citric acid cycle. This Corynebacterium glutamicum (strain ATCC 13032 / DSM 20300 / JCM 1318 / BCRC 11384 / CCUG 27702 / LMG 3730 / NBRC 12168 / NCIMB 10025 / NRRL B-2784 / 534) protein is Phosphoenolpyruvate carboxykinase [GTP].